Reading from the N-terminus, the 156-residue chain is CASP-like protein 5C1 (156 aa).

Over 1–21 the chain is Cytoplasmic; it reads MENRERAGAGAVGSAGSLGLR. A helical transmembrane segment spans residues 22-42; it reads VGQAVFSSASLLFMSVGVEFF. Residues 43–46 are Extracellular-facing; sequence SYTA. Residues 47–67 form a helical membrane-spanning segment; sequence FCFLVTIMGLVIPWSCTLAMI. The Cytoplasmic portion of the chain corresponds to 68 to 81; sequence DVYSILVGCPLRVP. Residues 82–102 traverse the membrane as a helical segment; sequence GVMVIVVIGDWVLAILSLAAA. Over 103 to 132 the chain is Extracellular; sequence SSSAAVIDLLLQFHGSHCSPRFCGRYQLSA. A helical transmembrane segment spans residues 133–153; that stretch reads MMAFLSWFLTAASSLFNLWFI. Topologically, residues 154–156 are cytoplasmic; it reads ASR.

The protein belongs to the Casparian strip membrane proteins (CASP) family. Homodimer and heterodimers.

Its subcellular location is the cell membrane. The protein is CASP-like protein 5C1 of Oryza sativa subsp. japonica (Rice).